The following is a 286-amino-acid chain: ATP synthase gamma chain (286 aa).

This sequence belongs to the ATPase gamma chain family. As to quaternary structure, F-type ATPases have 2 components, CF(1) - the catalytic core - and CF(0) - the membrane proton channel. CF(1) has five subunits: alpha(3), beta(3), gamma(1), delta(1), epsilon(1). CF(0) has three main subunits: a, b and c.

The protein resides in the cell inner membrane. Functionally, produces ATP from ADP in the presence of a proton gradient across the membrane. The gamma chain is believed to be important in regulating ATPase activity and the flow of protons through the CF(0) complex. This is ATP synthase gamma chain from Solibacter usitatus (strain Ellin6076).